We begin with the raw amino-acid sequence, 144 residues long: Large ribosomal subunit protein uL11 (144 aa).

The protein belongs to the universal ribosomal protein uL11 family. In terms of assembly, part of the ribosomal stalk of the 50S ribosomal subunit. Interacts with L10 and the large rRNA to form the base of the stalk. L10 forms an elongated spine to which L12 dimers bind in a sequential fashion forming a multimeric L10(L12)X complex. One or more lysine residues are methylated.

Forms part of the ribosomal stalk which helps the ribosome interact with GTP-bound translation factors. The chain is Large ribosomal subunit protein uL11 from Neisseria meningitidis serogroup A / serotype 4A (strain DSM 15465 / Z2491).